Consider the following 354-residue polypeptide: Uroporphyrinogen decarboxylase (354 aa).

Substrate is bound by residues 27 to 31, F46, D77, Y154, S209, and H327; that span reads RQAGR.

The protein belongs to the uroporphyrinogen decarboxylase family. As to quaternary structure, homodimer.

It is found in the cytoplasm. The enzyme catalyses uroporphyrinogen III + 4 H(+) = coproporphyrinogen III + 4 CO2. Its pathway is porphyrin-containing compound metabolism; protoporphyrin-IX biosynthesis; coproporphyrinogen-III from 5-aminolevulinate: step 4/4. Its function is as follows. Catalyzes the decarboxylation of four acetate groups of uroporphyrinogen-III to yield coproporphyrinogen-III. This is Uroporphyrinogen decarboxylase from Shewanella oneidensis (strain ATCC 700550 / JCM 31522 / CIP 106686 / LMG 19005 / NCIMB 14063 / MR-1).